The chain runs to 294 residues: Syntaxin-19 (294 aa).

The 63-residue stretch at 209–271 (LSEIEQRHKE…NNTKEKFGLA (63 aa)) folds into the t-SNARE coiled-coil homology domain.

The protein belongs to the syntaxin family. Interacts with EGFR.

The protein localises to the cell membrane. Its subcellular location is the cytoplasm. In terms of biological role, plays a role in endosomal trafficking of the epidermal growth factor receptor (EGFR). This Homo sapiens (Human) protein is Syntaxin-19 (STX19).